The chain runs to 479 residues: Anaerobic nitric oxide reductase flavorubredoxin (479 aa).

The interval 30–210 is zinc metallo-hydrolase; the sequence is LRGSSYNSYL…PFSRLVTPKI (181 aa). Histidine 79, glutamate 81, aspartate 83, histidine 147, aspartate 166, and histidine 227 together coordinate Fe cation. In terms of domain architecture, Flavodoxin-like spans 254–393; that stretch reads ITIFYDTMSN…LCREHGREIA (140 aa). FMN contacts are provided by residues 260–264 and 342–369; these read TMSNN and AFGSHGWSGGAVDRLSTRLQDAGFEMSL. A Rubredoxin-like domain is found at 423 to 474; the sequence is GPRMQCSVCQWIYDPAKGEPMQDVAPGTPWSEVPDNFLCPECSLGKDVFEEL. Fe cation contacts are provided by cysteine 428, cysteine 431, cysteine 461, and cysteine 464.

It in the N-terminal section; belongs to the zinc metallo-hydrolase group 3 family. Homotetramer. Fe cation is required as a cofactor. Requires FMN as cofactor.

Its subcellular location is the cytoplasm. Its pathway is nitrogen metabolism; nitric oxide reduction. Its function is as follows. Anaerobic nitric oxide reductase; uses NADH to detoxify nitric oxide (NO), protecting several 4Fe-4S NO-sensitive enzymes. Has at least 2 reductase partners, only one of which (NorW, flavorubredoxin reductase) has been identified. NO probably binds to the di-iron center; electrons enter from the NorW at rubredoxin and are transferred sequentially to the FMN center and the di-iron center. Also able to function as an aerobic oxygen reductase. This is Anaerobic nitric oxide reductase flavorubredoxin from Shigella dysenteriae serotype 1 (strain Sd197).